The chain runs to 123 residues: Ribosome-binding factor A (123 aa).

Belongs to the RbfA family. Monomer. Binds 30S ribosomal subunits, but not 50S ribosomal subunits or 70S ribosomes.

The protein resides in the cytoplasm. Its function is as follows. One of several proteins that assist in the late maturation steps of the functional core of the 30S ribosomal subunit. Associates with free 30S ribosomal subunits (but not with 30S subunits that are part of 70S ribosomes or polysomes). Required for efficient processing of 16S rRNA. May interact with the 5'-terminal helix region of 16S rRNA. The protein is Ribosome-binding factor A of Chlamydia trachomatis serovar A (strain ATCC VR-571B / DSM 19440 / HAR-13).